The chain runs to 150 residues: Endoribonuclease YbeY (150 aa).

Zn(2+)-binding residues include His-102, His-106, and His-112.

It belongs to the endoribonuclease YbeY family. Zn(2+) serves as cofactor.

The protein localises to the cytoplasm. Single strand-specific metallo-endoribonuclease involved in late-stage 70S ribosome quality control and in maturation of the 3' terminus of the 16S rRNA. The chain is Endoribonuclease YbeY from Thermotoga sp. (strain RQ2).